Here is a 301-residue protein sequence, read N- to C-terminus: Cytochrome c biogenesis protein CcsA (301 aa).

The next 8 membrane-spanning stretches (helical) occupy residues 13 to 33 (NNIT…GLIF), 39 to 59 (VFYI…IILG), 73 to 93 (LYES…YLEY), 97 to 117 (LYLI…FSTL), 146 to 166 (MLSY…LVLI), 209 to 229 (TIGF…VWAN), 236 to 256 (WSWD…AAYL), and 270 to 290 (AYLA…VNFL).

The protein belongs to the CcmF/CycK/Ccl1/NrfE/CcsA family. In terms of assembly, may interact with Ccs1.

The protein localises to the plastid. Its subcellular location is the chloroplast thylakoid membrane. Its function is as follows. Required during biogenesis of c-type cytochromes (cytochrome c6 and cytochrome f) at the step of heme attachment. The sequence is that of Cytochrome c biogenesis protein CcsA from Guillardia theta (Cryptophyte).